Consider the following 182-residue polypeptide: MSDNLSLHGTTILCLKKNEEIIIAADGQVSHGNTVLKSTARKLRTIANNKIIAGFAGSTADGLALFEKLAVKIEQHKHNLLRSAVELAKDWRSDKYLRRLEAMMIVADRSHILILTGNGDVVEPEKNVAAIGSGGLFALSAARALMSYENNLTAEEIALKSMNIAADLCVFSNHNIIMEKVV.

The active site involves threonine 10. Alanine 166, cysteine 169, and serine 172 together coordinate Na(+).

It belongs to the peptidase T1B family. HslV subfamily. A double ring-shaped homohexamer of HslV is capped on each side by a ring-shaped HslU homohexamer. The assembly of the HslU/HslV complex is dependent on binding of ATP.

It is found in the cytoplasm. It carries out the reaction ATP-dependent cleavage of peptide bonds with broad specificity.. With respect to regulation, allosterically activated by HslU binding. Protease subunit of a proteasome-like degradation complex believed to be a general protein degrading machinery. The protein is ATP-dependent protease subunit HslV of Rickettsia peacockii (strain Rustic).